The primary structure comprises 606 residues: Glutamine--fructose-6-phosphate aminotransferase [isomerizing] (606 aa).

Cys-2 serves as the catalytic Nucleophile; for GATase activity. One can recognise a Glutamine amidotransferase type-2 domain in the interval 2-217 (CGIVGMVGEN…DGDVMVLRKD (216 aa)). 2 consecutive SIS domains span residues 284 to 423 (YEEL…INGY) and 455 to 596 (LSEK…PDKP). The active-site For Fru-6P isomerization activity is Lys-601.

As to quaternary structure, homodimer.

The protein resides in the cytoplasm. It catalyses the reaction D-fructose 6-phosphate + L-glutamine = D-glucosamine 6-phosphate + L-glutamate. Catalyzes the first step in hexosamine metabolism, converting fructose-6P into glucosamine-6P using glutamine as a nitrogen source. The sequence is that of Glutamine--fructose-6-phosphate aminotransferase [isomerizing] from Thermotoga maritima (strain ATCC 43589 / DSM 3109 / JCM 10099 / NBRC 100826 / MSB8).